The chain runs to 604 residues: Glutamine--fructose-6-phosphate aminotransferase [isomerizing] (604 aa).

The Nucleophile; for GATase activity role is filled by cysteine 2. In terms of domain architecture, Glutamine amidotransferase type-2 spans 2 to 219 (CGIMGAVSER…EGDSACVTTQ (218 aa)). 2 SIS domains span residues 279–427 (LRAS…DNRA) and 454–594 (LASL…VDQP). Catalysis depends on lysine 599, which acts as the For Fru-6P isomerization activity.

Homodimer.

The protein localises to the cytoplasm. It carries out the reaction D-fructose 6-phosphate + L-glutamine = D-glucosamine 6-phosphate + L-glutamate. Functionally, catalyzes the first step in hexosamine metabolism, converting fructose-6P into glucosamine-6P using glutamine as a nitrogen source. This Legionella pneumophila subsp. pneumophila (strain Philadelphia 1 / ATCC 33152 / DSM 7513) protein is Glutamine--fructose-6-phosphate aminotransferase [isomerizing].